A 201-amino-acid polypeptide reads, in one-letter code: Probable GTP-binding protein EngB (201 aa).

The region spanning 23–196 is the EngB-type G domain; that stretch reads TGPEIALAGR…HEAVEEILSM (174 aa). GTP contacts are provided by residues 31 to 38, 58 to 62, 76 to 79, 143 to 146, and 175 to 177; these read GRSNVGKS, GKTQM, DLPG, TKAD, and YSA. Residues Ser-38 and Thr-60 each contribute to the Mg(2+) site.

This sequence belongs to the TRAFAC class TrmE-Era-EngA-EngB-Septin-like GTPase superfamily. EngB GTPase family. Mg(2+) is required as a cofactor.

Its function is as follows. Necessary for normal cell division and for the maintenance of normal septation. This chain is Probable GTP-binding protein EngB, found in Desulfitobacterium hafniense (strain DSM 10664 / DCB-2).